The following is a 367-amino-acid chain: Methylthioribose-1-phosphate isomerase (367 aa).

Substrate contacts are provided by residues 48–50 (RGA), Arg-91, and Gln-215. Asp-256 (proton donor) is an active-site residue. 266 to 267 (NK) contributes to the substrate binding site.

It belongs to the eIF-2B alpha/beta/delta subunits family. MtnA subfamily.

It catalyses the reaction 5-(methylsulfanyl)-alpha-D-ribose 1-phosphate = 5-(methylsulfanyl)-D-ribulose 1-phosphate. Its pathway is amino-acid biosynthesis; L-methionine biosynthesis via salvage pathway; L-methionine from S-methyl-5-thio-alpha-D-ribose 1-phosphate: step 1/6. Its function is as follows. Catalyzes the interconversion of methylthioribose-1-phosphate (MTR-1-P) into methylthioribulose-1-phosphate (MTRu-1-P). This chain is Methylthioribose-1-phosphate isomerase, found in Syntrophus aciditrophicus (strain SB).